The sequence spans 177 residues: ATP synthase subunit delta (177 aa).

It belongs to the ATPase delta chain family. In terms of assembly, F-type ATPases have 2 components, F(1) - the catalytic core - and F(0) - the membrane proton channel. F(1) has five subunits: alpha(3), beta(3), gamma(1), delta(1), epsilon(1). F(0) has three main subunits: a(1), b(2) and c(10-14). The alpha and beta chains form an alternating ring which encloses part of the gamma chain. F(1) is attached to F(0) by a central stalk formed by the gamma and epsilon chains, while a peripheral stalk is formed by the delta and b chains.

The protein resides in the cell inner membrane. Its function is as follows. F(1)F(0) ATP synthase produces ATP from ADP in the presence of a proton or sodium gradient. F-type ATPases consist of two structural domains, F(1) containing the extramembraneous catalytic core and F(0) containing the membrane proton channel, linked together by a central stalk and a peripheral stalk. During catalysis, ATP synthesis in the catalytic domain of F(1) is coupled via a rotary mechanism of the central stalk subunits to proton translocation. Functionally, this protein is part of the stalk that links CF(0) to CF(1). It either transmits conformational changes from CF(0) to CF(1) or is implicated in proton conduction. This chain is ATP synthase subunit delta, found in Shigella boydii serotype 18 (strain CDC 3083-94 / BS512).